A 1859-amino-acid polypeptide reads, in one-letter code: MILKSFLLGNLLSLCMKIINSVVVVGLYYGFLTTFSIGPSYLFLLRARVMEEGTEKKVSATTGFITGQLMMFISIYYAPLHLALGRPHTITVLALPYLLFHFFWNNHKHFFDYGSTTRNSMRNLSIQCVFLNNLIFQLFNHFILPSSTLARLVNIYMFRCNNKMLFVTSSFVGWLIGHILFMKWVGLVLFWIRQNHSIKSNVLIRSNKYLVSELRNSMARIFSILLFITCVYYLGRMPAPIVTKKLKETSKTEERGESEEERDVEIETTSETKGTKQEQERSTEEDPSPSLCSEEKEDPDKIDETEEIRVNGKEKTKDEFKETCYKSRPVYENYYLNGNQENSKLEILKDKEDKDLFWFEKPLVTLLFDYKRWNRPLRYIKNDRFENAVRNEMSQYLFYTCKNDGKQRISFTYPPSLSTFLEMIQRKIYLCTKEKLSSEEMYNHWIYTNEQKKNNLRNEFINRIEALDKEFVSLNVLEKITRLCNDETEQECSPKVYDPLLNGPYRGTITNLYSSSIMNETLIEDSIETLCLCINKIHGILLTDYREFEHKINKFDRKSLSRDIGHLSTSIIEFDGESIPSFNFKALSLLTEDGRIDSEDQAKFSKFLVKEISKRVPRWSYKLIDTLEQEERENEEEVAEDHEIRSRKAKRVVIFNDNGQNTDTHTNTSNDDQGNEVALIRYSQQSDFRRDIIKGSMRAQRRKIVTWKLFQANVHSPLFLDRIDKTFFFSFDISGMMKIIFRNWMVKNTELKISDYEEEEKNKKETEKKNEKKREEKTRILIAETWDSILCAQVIRGSMLVIQSIIRKYIVLPSLIIAKNISRMLLFQFPEWSEDLKDWSREIHVKCTYNGVQLSETEFPKNWLIDGIQIKILFPFCLKPWHRSKLGSHHRDPMKNKRKKNDFCFLTVWGMEAELPFGSPRKRLSFFEPICKELEKKIRKVKKNYFIVLKILKERTKLFIKVSKEKKGWVIKRVLFIKRIIKELNKILFGLREVYDSSENKNRKDYIISNQMIHESSIRIRSMDWTNSLLTEKKMKDLTDRTNTIRKKIERIKRDKKKTFLTSEIKISPNERSCDNKKLESPKNIWQILKRRNTRLIRKWNYFIKFLIERIYIDALPYIINIPRIHGRLFLESKKKIMDKSIYNHEKNQEGIDETNKNTTHFISTIKRPLSNNNNKNSKIFCDLSSLSQAYVFYKLSQTQVINKYNLRSVLQYHGASLFPKERIRYFCGTRGIFNSQSKHKRLRNFGMNEWKNWLRDHYQYDLSQIKWSRLVLQKWRNRVNQRRTVQNKDSKKLGSYEKDQLIHYETEHDYEVYSLPSQKENLKKNYRYDLLSYNYIHYENKKGSYIHVSPLQVTKGREIPYNYNIHKPEFFYVLGGIPISDYLGEDYIIDTEENPDRKYFDWIILNFCLRKKLDIEAWTDIDTGDSINKNTKTGTNNYQIIDKIDKKYLFYLTIHQEINPSNQKKNFFDWMGMNEEILNRTISNLELWFFQEFVLLYNAYKIKPWVIPIKLLLLNFNRNKNVSENKNINKKQKNDLWIPFTEKKSIELENRNQEEKETRGQGDLGSDAQNHGNLGYVLSNQQKDVEEDYAGSNIKKRRKKKQCTSNTEAELNFLLKRYLLFQLRWDDPFNQRMINNIKVYCLLLRLINPKEISISSIQSGEMSPDIIQKDLTITELIKKGLLIIEPVRLSIKRDGQFIMYQTISISLVHKNKQQTNGRCREKRYVDKNYFDESIARHEKMVGTGDENHYELLVPENISSPRRRRELRIRICFNSGNKNFVDRNPVFFNENKVKHCGRFLDENKHLDTDKKKLIKLKCFLWPNYQLEDLACMNRYWFNTNNGSRFSMSRIHMYPRLKIR.

The next 6 helical transmembrane spans lie at 18–38 (IINSVVVVGLYYGFLTTFSIG), 64–84 (FITGQLMMFISIYYAPLHLAL), 87–107 (PHTITVLALPYLLFHFFWNNH), 124–144 (LSIQCVFLNNLIFQLFNHFIL), 172–192 (VGWLIGHILFMKWVGLVLFWI), and 221–241 (IFSILLFITCVYYLGRMPAPI). Positions 247-314 (KETSKTEERG…TEEIRVNGKE (68 aa)) are disordered. Residues 256 to 268 (GESEEERDVEIET) show a composition bias toward acidic residues. Positions 273 to 284 (KGTKQEQERSTE) are enriched in basic and acidic residues. The segment covering 295-306 (EKEDPDKIDETE) has biased composition (acidic residues).

Belongs to the TIC214 family. In terms of assembly, part of the Tic complex.

The protein localises to the plastid. The protein resides in the chloroplast inner membrane. Functionally, involved in protein precursor import into chloroplasts. May be part of an intermediate translocation complex acting as a protein-conducting channel at the inner envelope. In Buxus microphylla (Littleleaf boxwood), this protein is Protein TIC 214.